The following is a 202-amino-acid chain: MDKFVKLTGVAAPLPVVNIDTDMIIPKDYLKTIKRTGLGKGLFAEARYNEDGSENPDFVLNKPAYRDAKILVAGDNFGCGSSREHAPWALLDFGIRCVISTSFADIFYNNCFKNGILPIKVSQEDLDKLMDDASRGSNAILTVDLENLEITGPDGGSIKFDLDAFKRHCLLNGLDDIGLTMEKGKAIDEFEKKNAASHPWAA.

Belongs to the LeuD family. LeuD type 1 subfamily. As to quaternary structure, heterodimer of LeuC and LeuD.

It carries out the reaction (2R,3S)-3-isopropylmalate = (2S)-2-isopropylmalate. It participates in amino-acid biosynthesis; L-leucine biosynthesis; L-leucine from 3-methyl-2-oxobutanoate: step 2/4. Functionally, catalyzes the isomerization between 2-isopropylmalate and 3-isopropylmalate, via the formation of 2-isopropylmaleate. This is 3-isopropylmalate dehydratase small subunit from Rhizobium etli (strain CIAT 652).